Reading from the N-terminus, the 571-residue chain is Membrane protein insertase YidC (571 aa).

Residues 4–24 traverse the membrane as a helical segment; the sequence is TRVFLIFAWLMVAVLLWMEWS. Residues 29–76 are disordered; it reads APTPAPTTTSAPAAAQSVPGATPGSVPNAQVPGAPGQAAVQAQASATP. Composition is skewed to low complexity over residues 34 to 43 and 57 to 76; these read PTTTSAPAAA and AQVP…SATP. 4 helical membrane passes run 369 to 389, 440 to 460, 483 to 503, and 518 to 538; these read LVGN…LVLY, GGCL…WVLV, YFIL…LTPA, and PLVF…YWVV.

Belongs to the OXA1/ALB3/YidC family. Type 1 subfamily. Interacts with the Sec translocase complex via SecD. Specifically interacts with transmembrane segments of nascent integral membrane proteins during membrane integration.

It localises to the cell inner membrane. In terms of biological role, required for the insertion and/or proper folding and/or complex formation of integral membrane proteins into the membrane. Involved in integration of membrane proteins that insert both dependently and independently of the Sec translocase complex, as well as at least some lipoproteins. Aids folding of multispanning membrane proteins. This Stenotrophomonas maltophilia (strain R551-3) protein is Membrane protein insertase YidC.